We begin with the raw amino-acid sequence, 459 residues long: Ribulose bisphosphate carboxylase large chain (459 aa).

Positions Met-1–Ser-2 are excised as a propeptide. At Pro-3 the chain carries N-acetylproline. The residue at position 14 (Lys-14) is an N6,N6,N6-trimethyllysine. 2 residues coordinate substrate: Asn-123 and Thr-173. Residue Lys-175 is the Proton acceptor of the active site. Lys-177 contacts substrate. 3 residues coordinate Mg(2+): Lys-201, Asp-203, and Glu-204. Lys-201 is subject to N6-carboxylysine. His-294 acts as the Proton acceptor in catalysis. Arg-295, His-327, and Ser-379 together coordinate substrate.

The protein belongs to the RuBisCO large chain family. Type I subfamily. Heterohexadecamer of 8 large chains and 8 small chains; disulfide-linked. The disulfide link is formed within the large subunit homodimers. It depends on Mg(2+) as a cofactor. The disulfide bond which can form in the large chain dimeric partners within the hexadecamer appears to be associated with oxidative stress and protein turnover.

It localises to the plastid. Its subcellular location is the chloroplast. The enzyme catalyses 2 (2R)-3-phosphoglycerate + 2 H(+) = D-ribulose 1,5-bisphosphate + CO2 + H2O. It catalyses the reaction D-ribulose 1,5-bisphosphate + O2 = 2-phosphoglycolate + (2R)-3-phosphoglycerate + 2 H(+). Functionally, ruBisCO catalyzes two reactions: the carboxylation of D-ribulose 1,5-bisphosphate, the primary event in carbon dioxide fixation, as well as the oxidative fragmentation of the pentose substrate in the photorespiration process. Both reactions occur simultaneously and in competition at the same active site. The chain is Ribulose bisphosphate carboxylase large chain from Streptopus lanceolatus (Rose twisted stalk).